Reading from the N-terminus, the 59-residue chain is Cecropin-B2 (59 aa).

The signal sequence occupies residues 1-23; sequence MNFNKLFLIVILAALLLLGQTEA. L57 is subject to Leucine amide.

This sequence belongs to the cecropin family.

The protein localises to the secreted. Cecropins have lytic and antibacterial activity against several Gram-positive and Gram-negative bacteria. This Culex pipiens pipiens (Northern house mosquito) protein is Cecropin-B2 (CECB2).